We begin with the raw amino-acid sequence, 432 residues long: UDP-N-acetylglucosamine 1-carboxyvinyltransferase (432 aa).

Phosphoenolpyruvate is bound at residue 22–23 (KN). Arginine 102 serves as a coordination point for UDP-N-acetyl-alpha-D-glucosamine. The active-site Proton donor is the cysteine 126. Cysteine 126 bears the 2-(S-cysteinyl)pyruvic acid O-phosphothioketal mark. UDP-N-acetyl-alpha-D-glucosamine is bound by residues 131–135 (RPVDL), aspartate 317, and isoleucine 339.

This sequence belongs to the EPSP synthase family. MurA subfamily.

The protein resides in the cytoplasm. The catalysed reaction is phosphoenolpyruvate + UDP-N-acetyl-alpha-D-glucosamine = UDP-N-acetyl-3-O-(1-carboxyvinyl)-alpha-D-glucosamine + phosphate. The protein operates within cell wall biogenesis; peptidoglycan biosynthesis. Cell wall formation. Adds enolpyruvyl to UDP-N-acetylglucosamine. This chain is UDP-N-acetylglucosamine 1-carboxyvinyltransferase, found in Rhodospirillum centenum (strain ATCC 51521 / SW).